A 221-amino-acid chain; its full sequence is Cytidylate kinase 1 (221 aa).

Position 7–15 (7–15) interacts with ATP; it reads GPSASGKSS.

It belongs to the cytidylate kinase family. Type 1 subfamily.

The protein resides in the cytoplasm. It carries out the reaction CMP + ATP = CDP + ADP. It catalyses the reaction dCMP + ATP = dCDP + ADP. The protein is Cytidylate kinase 1 of Borreliella afzelii (strain PKo) (Borrelia afzelii).